We begin with the raw amino-acid sequence, 97 residues long: Large ribosomal subunit protein uL23 (97 aa).

The protein belongs to the universal ribosomal protein uL23 family. In terms of assembly, part of the 50S ribosomal subunit. Contacts protein L29, and trigger factor when it is bound to the ribosome.

One of the early assembly proteins it binds 23S rRNA. One of the proteins that surrounds the polypeptide exit tunnel on the outside of the ribosome. Forms the main docking site for trigger factor binding to the ribosome. This chain is Large ribosomal subunit protein uL23, found in Brucella canis (strain ATCC 23365 / NCTC 10854 / RM-666).